Reading from the N-terminus, the 427-residue chain is UPF0229 protein YeaH (427 aa).

The segment at arginine 87 to glutamate 110 is disordered. Gly residues predominate over residues glutamine 92–glutamine 102.

It belongs to the UPF0229 family.

The polypeptide is UPF0229 protein YeaH (Escherichia coli O6:K15:H31 (strain 536 / UPEC)).